A 432-amino-acid chain; its full sequence is Adenylosuccinate lyase (432 aa).

N(6)-(1,2-dicarboxyethyl)-AMP is bound by residues 4–5 (RY), 67–69 (RHD), and 93–94 (TS). The active-site Proton donor/acceptor is the His141. Gln212 contacts N(6)-(1,2-dicarboxyethyl)-AMP. Residue Ser262 is the Proton donor/acceptor of the active site. N(6)-(1,2-dicarboxyethyl)-AMP-binding positions include Ser263, 268-270 (KRN), Asn276, and 307-311 (SAERI).

Belongs to the lyase 1 family. Adenylosuccinate lyase subfamily. Homodimer and homotetramer. Residues from neighboring subunits contribute catalytic and substrate-binding residues to each active site.

The enzyme catalyses N(6)-(1,2-dicarboxyethyl)-AMP = fumarate + AMP. It catalyses the reaction (2S)-2-[5-amino-1-(5-phospho-beta-D-ribosyl)imidazole-4-carboxamido]succinate = 5-amino-1-(5-phospho-beta-D-ribosyl)imidazole-4-carboxamide + fumarate. It functions in the pathway purine metabolism; AMP biosynthesis via de novo pathway; AMP from IMP: step 2/2. The protein operates within purine metabolism; IMP biosynthesis via de novo pathway; 5-amino-1-(5-phospho-D-ribosyl)imidazole-4-carboxamide from 5-amino-1-(5-phospho-D-ribosyl)imidazole-4-carboxylate: step 2/2. In terms of biological role, catalyzes two reactions in de novo purine nucleotide biosynthesis. Catalyzes the breakdown of 5-aminoimidazole- (N-succinylocarboxamide) ribotide (SAICAR or 2-[5-amino-1-(5-phospho-beta-D-ribosyl)imidazole-4-carboxamido]succinate) to 5-aminoimidazole-4-carboxamide ribotide (AICAR or 5-amino-1-(5-phospho-beta-D-ribosyl)imidazole-4-carboxamide) and fumarate, and of adenylosuccinate (ADS or N(6)-(1,2-dicarboxyethyl)-AMP) to adenosine monophosphate (AMP) and fumarate. The protein is Adenylosuccinate lyase (purB) of Streptococcus mutans serotype c (strain ATCC 700610 / UA159).